We begin with the raw amino-acid sequence, 225 residues long: Class E basic helix-loop-helix protein 23 (225 aa).

Positions 35–104 are disordered; sequence EAARGYGTPG…PREQRSLRLS (70 aa). A bHLH domain is found at 100–154; the sequence is SLRLSINARERRRMHDLNDALDGLRAVIPYAHSPSVRKLSKIATLLLAKNYILMQ.

Its subcellular location is the nucleus. Functionally, may function as transcriptional repressor. May modulate the expression of genes required for the differentiation and/or maintenance of pancreatic and neuronal cell types. May be important for rod bipolar cell maturation. The chain is Class E basic helix-loop-helix protein 23 (BHLHE23) from Homo sapiens (Human).